The sequence spans 141 residues: Hemoglobin subunit alpha-A (141 aa).

Positions 1-141 constitute a Globin domain; it reads VLSASDKTNV…VAKELTAKYR (141 aa). Residue histidine 58 participates in O2 binding. Histidine 87 is a binding site for heme b.

This sequence belongs to the globin family. In terms of assembly, heterotetramer of two alpha chains and two beta chains. In terms of tissue distribution, red blood cells.

In terms of biological role, involved in oxygen transport from the lung to the various peripheral tissues. The chain is Hemoglobin subunit alpha-A (HBAA) from Phalacrocorax carbo (Great cormorant).